A 94-amino-acid polypeptide reads, in one-letter code: Large ribosomal subunit protein bL25 (94 aa).

The tract at residues 1–20 (MFKFNAEVRQSQGKGASRRL) is disordered.

Belongs to the bacterial ribosomal protein bL25 family. As to quaternary structure, part of the 50S ribosomal subunit; part of the 5S rRNA/L5/L18/L25 subcomplex. Contacts the 5S rRNA. Binds to the 5S rRNA independently of L5 and L18.

This is one of the proteins that binds to the 5S RNA in the ribosome where it forms part of the central protuberance. This chain is Large ribosomal subunit protein bL25, found in Pasteurella multocida (strain Pm70).